We begin with the raw amino-acid sequence, 203 residues long: Enterotoxin-like toxin X (203 aa).

Residues 164 to 180 (YTLESHKELQKNRENVE) are sialic acid-binding motif.

The protein belongs to the staphylococcal/streptococcal toxin family.

Its subcellular location is the secreted. Functionally, plays a role in the inhibition of the host innate immune system. Inhibits phagocytosis and killing by human neutrophils by interacting with multiple neutrophil surface glycoproteins in a sialic acid-dependent manner. In Staphylococcus aureus, this protein is Enterotoxin-like toxin X.